Consider the following 348-residue polypeptide: Anthranilate phosphoribosyltransferase (348 aa).

5-phospho-alpha-D-ribose 1-diphosphate-binding positions include glycine 81, 84–85 (GD), threonine 89, 91–94 (NIST), 109–117 (KHGNRSSSG), and serine 121. An anthranilate-binding site is contributed by glycine 81. Serine 93 serves as a coordination point for Mg(2+). Asparagine 112 is an anthranilate binding site. An anthranilate-binding site is contributed by arginine 167. Mg(2+)-binding residues include aspartate 226 and glutamate 227.

This sequence belongs to the anthranilate phosphoribosyltransferase family. As to quaternary structure, homodimer. Requires Mg(2+) as cofactor.

The catalysed reaction is N-(5-phospho-beta-D-ribosyl)anthranilate + diphosphate = 5-phospho-alpha-D-ribose 1-diphosphate + anthranilate. Its pathway is amino-acid biosynthesis; L-tryptophan biosynthesis; L-tryptophan from chorismate: step 2/5. Catalyzes the transfer of the phosphoribosyl group of 5-phosphorylribose-1-pyrophosphate (PRPP) to anthranilate to yield N-(5'-phosphoribosyl)-anthranilate (PRA). In Nitrosopumilus maritimus (strain SCM1), this protein is Anthranilate phosphoribosyltransferase.